We begin with the raw amino-acid sequence, 397 residues long: Enoyl-[acyl-carrier-protein] reductase [NADH] (397 aa).

NAD(+)-binding positions include 48–53, 74–75, 111–112, and 139–140; these read GASTGY, FE, DA, and VA. Tyr-225 is a substrate binding site. The Proton donor role is filled by Tyr-235. NAD(+) contacts are provided by residues Lys-244 and 273–275; that span reads VVT.

The protein belongs to the TER reductase family. In terms of assembly, monomer.

The enzyme catalyses a 2,3-saturated acyl-[ACP] + NAD(+) = a (2E)-enoyl-[ACP] + NADH + H(+). It functions in the pathway lipid metabolism; fatty acid biosynthesis. Involved in the final reduction of the elongation cycle of fatty acid synthesis (FAS II). Catalyzes the reduction of a carbon-carbon double bond in an enoyl moiety that is covalently linked to an acyl carrier protein (ACP). In Burkholderia pseudomallei (strain 668), this protein is Enoyl-[acyl-carrier-protein] reductase [NADH].